Reading from the N-terminus, the 142-residue chain is Prefoldin subunit alpha 2 (142 aa).

The protein belongs to the prefoldin subunit alpha family. In terms of assembly, heterohexamer of two alpha and four beta subunits.

Its subcellular location is the cytoplasm. Its function is as follows. Molecular chaperone capable of stabilizing a range of proteins. Seems to fulfill an ATP-independent, HSP70-like function in archaeal de novo protein folding. The chain is Prefoldin subunit alpha 2 from Thermococcus kodakarensis (strain ATCC BAA-918 / JCM 12380 / KOD1) (Pyrococcus kodakaraensis (strain KOD1)).